A 598-amino-acid polypeptide reads, in one-letter code: Fibulin-1 (598 aa).

Intrachain disulfides connect alanine 1–cysteine 25, cysteine 7–cysteine 26, cysteine 28–cysteine 52, cysteine 29–cysteine 59, cysteine 42–cysteine 60, cysteine 96–cysteine 106, cysteine 102–cysteine 115, cysteine 117–cysteine 130, cysteine 136–cysteine 149, cysteine 143–cysteine 158, cysteine 164–cysteine 176, cysteine 182–cysteine 195, cysteine 189–cysteine 204, cysteine 210–cysteine 222, cysteine 228–cysteine 242, cysteine 257–cysteine 270, cysteine 275–cysteine 288, cysteine 282–cysteine 297, cysteine 299–cysteine 312, cysteine 318–cysteine 330, cysteine 326–cysteine 339, cysteine 341–cysteine 354, cysteine 360–cysteine 369, cysteine 365–cysteine 378, cysteine 380–cysteine 394, cysteine 400–cysteine 413, cysteine 409–cysteine 422, cysteine 424–cysteine 438, cysteine 444–cysteine 457, cysteine 451–cysteine 466, and cysteine 471–cysteine 483. Anaphylatoxin-like domains follow at residues 1–27 and 28–60; these read ANEQ…RCCH and CCLL…RACC. A glycan (N-linked (GlcNAc...) asparagine) is linked at asparagine 14. Residues 92–131 enclose the EGF-like 1 domain; the sequence is LNDRCRGGGPCKQQCRDTGDEVVCSCFVGYQLLSDGVSCE. Positions 132 to 177 constitute an EGF-like 2; calcium-binding domain; that stretch reads DVNECITGSHSCRLGESCINTVGSFRCQRDSSCGTGYELTEDNSCK. The EGF-like 3; calcium-binding domain occupies 178-223; it reads DIDQCESGIHNCLPDFICQNTLGSFRCRPKLQCKNGFIQDALANCI. The region spanning 224–270 is the EGF-like 4; calcium-binding domain; the sequence is DINECLSIVSAPCPTGHTCINTEGSYTQKNVPNCGRGYHLNEEGTRC. The EGF-like 5; calcium-binding domain occupies 271-313; it reads DVNECAPPAEPCGKGHRCVNSPGSFRCECKTGYYFDGISRMCV. The interval 271–355 is self-association and FN1-binding; the sequence is DVNECAPPAE…RLSVDGRSCE (85 aa). The 42-residue stretch at 314–355 folds into the EGF-like 6; calcium-binding domain; the sequence is DVNECQRYPGRLCGHKCENTLGSYVCSCSVGFRLSVDGRSCE. An EGF-like 7; calcium-binding domain is found at 356–395; sequence DINECSSSPCSQECANVYGSYQCYCRRGYQLSDVDGVTCE. The 44-residue stretch at 396-439 folds into the EGF-like 8; calcium-binding domain; the sequence is DIDECALPTGGHICSYRCINIPGSFQCSCPASGYRLAPNGRNCQ. In terms of domain architecture, EGF-like 9; calcium-binding spans 440 to 484; the sequence is DIDECVTGIHNCSINETCFNIQGGFRCLAFECPENYRRSAATRCE. Residues asparagine 450 and asparagine 454 are each glycosylated (N-linked (GlcNAc...) asparagine).

Belongs to the fibulin family. Homomultimerizes and interacts with various extracellular matrix components. Interacts with FBLN7. Interacts with the mature/soluble form of DTR. Interacts with CCN3.

The protein localises to the secreted. It localises to the extracellular space. It is found in the extracellular matrix. Its function is as follows. Incorporated into fibronectin-containing matrix fibers. May play a role in cell adhesion and migration along protein fibers within the extracellular matrix (ECM). Could be important for certain developmental processes and contribute to the supramolecular organization of ECM architecture, in particular to those of basement membranes. May serve to anchor the mature/soluble form of DTR to its fibers as it migrates through the extracellular matrix. The direct physical association with DTR may be useful in such tissue developmental processes as wound healing. The protein is Fibulin-1 (FBLN1) of Chlorocebus aethiops (Green monkey).